Here is a 307-residue protein sequence, read N- to C-terminus: Transcription factor bHLH127 (307 aa).

Disordered regions lie at residues 41-68 (SDPL…LPHQ) and 101-155 (PHPQ…AEMH). Pro residues predominate over residues 110–119 (APPPPKPPSS). The bHLH domain occupies 150–199 (RAAEMHNLAERRRREKINERMKTLQQLIPRCNKSTKVSMLEDVIEYVKSL).

Belongs to the bHLH protein family. As to quaternary structure, homodimer.

The protein resides in the nucleus. The protein is Transcription factor bHLH127 (BHLH127) of Arabidopsis thaliana (Mouse-ear cress).